The sequence spans 432 residues: Adenylosuccinate synthetase (432 aa).

GTP-binding positions include 12–18 and 40–42; these read GDEGKGK and GHT. Asp-13 functions as the Proton acceptor in the catalytic mechanism. Mg(2+) is bound by residues Asp-13 and Gly-40. IMP-binding positions include 13-16, 38-41, Thr-130, Arg-144, Gln-225, Thr-240, and Arg-304; these read DEGK and NAGH. Residue His-41 is the Proton donor of the active site. Position 300–306 (300–306) interacts with substrate; sequence ATTGRRR. Residues Arg-306, 332–334, and 415–417 contribute to the GTP site; these read KLD and SVG.

It belongs to the adenylosuccinate synthetase family. As to quaternary structure, homodimer. It depends on Mg(2+) as a cofactor.

The protein localises to the cytoplasm. The enzyme catalyses IMP + L-aspartate + GTP = N(6)-(1,2-dicarboxyethyl)-AMP + GDP + phosphate + 2 H(+). It functions in the pathway purine metabolism; AMP biosynthesis via de novo pathway; AMP from IMP: step 1/2. Functionally, plays an important role in the de novo pathway of purine nucleotide biosynthesis. Catalyzes the first committed step in the biosynthesis of AMP from IMP. The chain is Adenylosuccinate synthetase from Syntrophus aciditrophicus (strain SB).